The following is a 125-amino-acid chain: Holo-[acyl-carrier-protein] synthase (125 aa).

Mg(2+) contacts are provided by aspartate 8 and glutamate 57.

This sequence belongs to the P-Pant transferase superfamily. AcpS family. The cofactor is Mg(2+).

It is found in the cytoplasm. It catalyses the reaction apo-[ACP] + CoA = holo-[ACP] + adenosine 3',5'-bisphosphate + H(+). In terms of biological role, transfers the 4'-phosphopantetheine moiety from coenzyme A to a Ser of acyl-carrier-protein. The protein is Holo-[acyl-carrier-protein] synthase of Nitrosomonas europaea (strain ATCC 19718 / CIP 103999 / KCTC 2705 / NBRC 14298).